Reading from the N-terminus, the 474-residue chain is MTKKLHIKTWGCQMNEYDSSKMADLLDATHGYQLTDVAEEADVLLLNTCSIREKAQEKVFHQLGRWKLLKEKNPDLIIGVGGCVASQEGEHIRQRAHYVDIIFGPQTLHRLPEMINSVRGDRSPVVDISFPEIEKFDRLPEPRAEGPTAFVSIMEGCNKYCTYCVVPYTRGEEVSRPSDDILFEIAQLAAQGVREVNLLGQNVNAWRGENYDGTTGTFADLLRLVAAIDGIDRIRFTTSHPIEFTDDIIEVYRDTPELVSFLHLPVQSGSDRILNLMGRTHTALEYKAIIRKLRAARPDIQISSDFIVGFPGETTEDFEKTMKLIADVNFDMSYSFIFSARPGTPAADMVDDVPEEEKKQRLYILQERINQQAMAWSRRMLGTTQRILVEGTSRKSIMELSGRTENNRVVNFEGTPDMIGKFVDVEITDVYPNSLRGKVVRTEDEMGLRVAETPESVIARTRKENDLGVGYYQP.

In terms of domain architecture, MTTase N-terminal spans 3-120 (KKLHIKTWGC…LPEMINSVRG (118 aa)). Cys12, Cys49, Cys83, Cys157, Cys161, and Cys164 together coordinate [4Fe-4S] cluster. One can recognise a Radical SAM core domain in the interval 143 to 375 (RAEGPTAFVS…QERINQQAMA (233 aa)). The 64-residue stretch at 378–441 (RRMLGTTQRI…PNSLRGKVVR (64 aa)) folds into the TRAM domain.

It belongs to the methylthiotransferase family. MiaB subfamily. Monomer. [4Fe-4S] cluster is required as a cofactor.

It is found in the cytoplasm. It carries out the reaction N(6)-dimethylallyladenosine(37) in tRNA + (sulfur carrier)-SH + AH2 + 2 S-adenosyl-L-methionine = 2-methylsulfanyl-N(6)-dimethylallyladenosine(37) in tRNA + (sulfur carrier)-H + 5'-deoxyadenosine + L-methionine + A + S-adenosyl-L-homocysteine + 2 H(+). Functionally, catalyzes the methylthiolation of N6-(dimethylallyl)adenosine (i(6)A), leading to the formation of 2-methylthio-N6-(dimethylallyl)adenosine (ms(2)i(6)A) at position 37 in tRNAs that read codons beginning with uridine. The sequence is that of tRNA-2-methylthio-N(6)-dimethylallyladenosine synthase from Escherichia coli O81 (strain ED1a).